Reading from the N-terminus, the 452-residue chain is Keratin, type II cytoskeletal 80 (452 aa).

Positions 1–82 (MACRSCVVGF…DPAVQQLKNQ (82 aa)) are head. Serine 45 carries the phosphoserine modification. The interval 82–118 (QEKEEMKALNDKFASLIGKVQALEQRNQLLETRWSFL) is coil 1A. The IF rod domain maps to 83–394 (EKEEMKALND…KLVEGEEGRM (312 aa)). The interval 119 to 135 (QGQDSAIFDLGHLYEEY) is linker 1. The interval 136 to 227 (QGRLQEELRK…TIYEQELKDL (92 aa)) is coil 1B. Positions 228 to 251 (AAQVKDVSVTVGMDSRCHIDLSGI) are linker 12. Residues 252–390 (VEEVKAQYDA…ATYRKLVEGE (139 aa)) are coil 2. The segment at 391 to 452 (EGRMDSPSAT…YFSQESEVSE (62 aa)) is tail. Serine 396 bears the Phosphoserine mark. The interval 412–434 (AASRSGLSKAPSRKKKGSKGPVI) is disordered.

It belongs to the intermediate filament family. Heterotetramer of two type I and two type II keratins. As to expression, weakly expressed in tongue, but not skin or in any other tissues or organs examined.

In Homo sapiens (Human), this protein is Keratin, type II cytoskeletal 80 (KRT80).